Here is a 359-residue protein sequence, read N- to C-terminus: MPAHLLQEEISSSYTTTTTITAPPSRVLQNGGGKLEKTPLYLEEDIRPEMRDDIYDPTYQDKEGPKPKLEYVWRNIILMSLLHLGALYGITLIPTCKIYTYIWVLFYYLMGALGITAGAHRLWSHRTYKARLPLRVFLIIGNTMAFQNDVFEWSRDHRAHHKFSETDADPHNSRRGFFFSHVGWLLVRKHPAVKEKGSTLNLSDLRAEKLVMFQRRYYKPGVLLLCFILPTLVPWYLWDETFQNSLFFATLFRYALGLNVTWLVNSAAHMYGYRPYDKTINPRENILVSLGAAGEGFHNYHHTFPYDYSASEYRWHINFTTFFIDCMAAIGLAYDRKKVSKAAILARIKRTGEESYKSG.

Residues 1–72 (MPAHLLQEEI…EGPKPKLEYV (72 aa)) are Cytoplasmic-facing. Residues 73–93 (WRNIILMSLLHLGALYGITLI) traverse the membrane as a helical segment. N75 is a binding site for substrate. Over 94-97 (PTCK) the chain is Lumenal. The chain crosses the membrane as a helical span at residues 98 to 118 (IYTYIWVLFYYLMGALGITAG). The Cytoplasmic segment spans residues 119 to 217 (AHRLWSHRTY…EKLVMFQRRY (99 aa)). 2 residues coordinate Fe cation: H120 and H125. Positions 120–125 (HRLWSH) match the Histidine box-1 motif. Residues N148, R155, and D156 each contribute to the substrate site. H157, H160, and H161 together coordinate Fe cation. A Histidine box-2 motif is present at residues 157–161 (HRAHH). Substrate is bound by residues R188 and K189. Residues S198 and S203 each carry the phosphoserine modification. A helical membrane pass occupies residues 218-237 (YKPGVLLLCFILPTLVPWYL). The Lumenal portion of the chain corresponds to 238–241 (WDET). Residues 242 to 263 (FQNSLFFATLFRYALGLNVTWL) form a helical membrane-spanning segment. A substrate-binding site is contributed by W262. At 264–359 (VNSAAHMYGY…RTGEESYKSG (96 aa)) the chain is on the cytoplasmic side. Positions 269, 298, 301, and 302 each coordinate Fe cation. The Histidine box-3 signature appears at 298-302 (HNYHH).

This sequence belongs to the fatty acid desaturase type 1 family. The cofactor is Fe(2+).

It is found in the endoplasmic reticulum membrane. The catalysed reaction is octadecanoyl-CoA + 2 Fe(II)-[cytochrome b5] + O2 + 2 H(+) = (9Z)-octadecenoyl-CoA + 2 Fe(III)-[cytochrome b5] + 2 H2O. It carries out the reaction hexadecanoyl-CoA + 2 Fe(II)-[cytochrome b5] + O2 + 2 H(+) = (9Z)-hexadecenoyl-CoA + 2 Fe(III)-[cytochrome b5] + 2 H2O. Stearoyl-CoA desaturase that utilizes O(2) and electrons from reduced cytochrome b5 to introduce the first double bond into saturated fatty acyl-CoA substrates. Catalyzes the insertion of a cis double bond at the delta-9 position into fatty acyl-CoA substrates including palmitoyl-CoA and stearoyl-CoA. Gives rise to a mixture of 16:1 and 18:1 unsaturated fatty acids. Plays an important role in lipid biosynthesis. Plays an important role in regulating the expression of genes that are involved in lipogenesis and in regulating mitochondrial fatty acid oxidation. Plays an important role in body energy homeostasis. Contributes to the biosynthesis of membrane phospholipids, cholesterol esters and triglycerides. The chain is Stearoyl-CoA desaturase (SCD) from Bos taurus (Bovine).